Consider the following 323-residue polypeptide: Beta-ketoacyl-[acyl-carrier-protein] synthase III (323 aa).

Catalysis depends on residues C112 and H249. Residues 250 to 254 are ACP-binding; it reads QANYR. N279 is an active-site residue.

The protein belongs to the thiolase-like superfamily. FabH family. In terms of assembly, homodimer.

The protein resides in the cytoplasm. It catalyses the reaction malonyl-[ACP] + acetyl-CoA + H(+) = 3-oxobutanoyl-[ACP] + CO2 + CoA. It functions in the pathway lipid metabolism; fatty acid biosynthesis. Catalyzes the condensation reaction of fatty acid synthesis by the addition to an acyl acceptor of two carbons from malonyl-ACP. Catalyzes the first condensation reaction which initiates fatty acid synthesis and may therefore play a role in governing the total rate of fatty acid production. Possesses both acetoacetyl-ACP synthase and acetyl transacylase activities. Its substrate specificity determines the biosynthesis of branched-chain and/or straight-chain of fatty acids. In Clostridium kluyveri (strain NBRC 12016), this protein is Beta-ketoacyl-[acyl-carrier-protein] synthase III.